The primary structure comprises 216 residues: Transmembrane emp24 domain-containing protein eca (216 aa).

A signal peptide spans 1–20 (MRDQFISLALILCVLHSACG). Residues 21-182 (LYFHISETER…FRHTSESTNS (162 aa)) are Lumenal-facing. The GOLD domain occupies 30–126 (RKCFIEEVPD…QLRVHLDIQV (97 aa)). The stretch at 134 to 164 (ANVAQKEKLTELQLRIRQLLDQVEQITKEQN) forms a coiled coil. The chain crosses the membrane as a helical span at residues 183 to 203 (RVLWWSLAQTVVLVCMGFWQM). Topologically, residues 204 to 216 (RHLKSFFEAKKLV) are cytoplasmic. The short motif at 213-216 (KKLV) is the Prevents secretion from ER element.

Belongs to the EMP24/GP25L family.

Its subcellular location is the endoplasmic reticulum membrane. Functionally, eca and bai are essential, though not redundant, for dorsoventral patterning of the embryo. Specifically required during early embryogenesis for the activity of maternal tkv, while the zygotic tkv is not affected. Involved in Golgi organization. The chain is Transmembrane emp24 domain-containing protein eca from Drosophila simulans (Fruit fly).